The sequence spans 120 residues: Glycophorin-A (120 aa).

The residue at position 1 (Q1) is a Pyrrolidone carboxylic acid. The disordered stretch occupies residues 1–40 (QTIATGSPPIAGTSDLSTITSAATPTFTTEQDGREQGDGL). T2 and T5 each carry an O-linked (GalNAc...) threonine glycan. S7 carries O-linked (GalNAc...) serine glycosylation. An O-linked (GalNAc...) threonine glycan is attached at T13. Residue S17 is glycosylated (O-linked (GalNAc...) serine). Residues 17–29 (STITSAATPTFTT) show a composition bias toward low complexity. O-linked (GalNAc...) threonine glycans are attached at residues T18 and T20. S21 carries an O-linked (GalNAc...) serine glycan. Residues T24 and T28 are each glycosylated (O-linked (GalNAc...) threonine). Residues 50–72 (VITVIILGVMAGIIGIILLLAYV) form a helical membrane-spanning segment. The tract at residues 78 to 120 (KRPPADVPPPASTVPSADAPPPVSEDDETSLTSVETDYPGDSQ) is disordered. Over residues 82 to 100 (ADVPPPASTVPSADAPPPV) the composition is skewed to pro residues. Over residues 107 to 120 (SLTSVETDYPGDSQ) the composition is skewed to polar residues. Residue S119 is modified to Phosphoserine.

Belongs to the glycophorin-A family. As to quaternary structure, homodimer.

The protein localises to the membrane. In terms of biological role, glycophorin A is the major intrinsic membrane sialoglycoprotein of the erythrocyte. Appears to be important for the function of SLC4A1 and is required for high activity of SLC4A1. May be involved in translocation of SLC4A1 to the plasma membrane. The sequence is that of Glycophorin-A from Equus caballus (Horse).